We begin with the raw amino-acid sequence, 221 residues long: HP1-HOAP-interacting protein (221 aa).

The interval N69 to Y113 is disordered. Residues V86–S103 show a composition bias toward low complexity.

Component of the HipHop-HOAP telomere-capping complex, composed of at least HipHop and cav/HOAP, and may include Su(var)205/HP1; HipHop and cav/HOAP, but not Su(var)205, are interdependent for their protein stability. Interacts (via N-terminus) with cav/HOAP and Su(var)205/HP1. The HipHop-HOAP complex recruits the MTV complex, consisting of moi/modigliani, tea and ver/verrocchio, to telomeres to form the terminin telomere-capping complex.

Its subcellular location is the nucleus. It is found in the chromosome. It localises to the telomere. In terms of biological role, part of the HipHop-HOAP complex that recruits the MTV complex to form the terminin telomere-capping complex, which binds to chromosome ends in a sequence-independent manner and prevents telomere fusion. This is HP1-HOAP-interacting protein from Drosophila melanogaster (Fruit fly).